Reading from the N-terminus, the 546-residue chain is Mercuric reductase (546 aa).

The HMA domain occupies 2 to 66 (NKFKVNISGM…AIDEANYQAG (65 aa)). A metal cation contacts are provided by cysteine 13 and cysteine 16. FAD is bound by residues alanine 96, glycine 116, and threonine 121. The cysteines at positions 122 and 127 are disulfide-linked. Lysine 131 and alanine 195 together coordinate FAD. NAD(+) contacts are provided by residues 256 to 263 (GSGYIGME) and glycine 346. Residues aspartate 387 and valine 395 each contribute to the FAD site. 2 residues coordinate Hg(2+): cysteine 543 and cysteine 544.

The protein belongs to the class-I pyridine nucleotide-disulfide oxidoreductase family. Homodimer. It depends on FAD as a cofactor.

It carries out the reaction Hg + NADP(+) + H(+) = Hg(2+) + NADPH. Its activity is regulated as follows. Uses NADPH as the preferred electron donor, but shows slight activity with NADH as well. Inhibited by Cu(2+), Cd(2+), Zn(2+) and Co(2+), with Cu(2+) showing the strongest inhibition. Enzyme activity is enhanced by b-mercaptoethanol and NaCl up to concentrations of 500 uM and 100 mM respectively, followed by inhibition at higher concentrations. Functionally, resistance to Hg(2+) in bacteria appears to be governed by a specialized system which includes mercuric reductase. MerA protein is responsible for volatilizing mercury as Hg(0). Catalyzes reduction of Hg(2+) to elemental Hg, which is volatile and can diffuse out of cells passively. Plays a pivotal role in mercury resistance and cell protection. This is Mercuric reductase from Lysinibacillus sphaericus (Bacillus sphaericus).